We begin with the raw amino-acid sequence, 446 residues long: Exodeoxyribonuclease 7 large subunit (446 aa).

It belongs to the XseA family. As to quaternary structure, heterooligomer composed of large and small subunits.

It is found in the cytoplasm. It carries out the reaction Exonucleolytic cleavage in either 5'- to 3'- or 3'- to 5'-direction to yield nucleoside 5'-phosphates.. Functionally, bidirectionally degrades single-stranded DNA into large acid-insoluble oligonucleotides, which are then degraded further into small acid-soluble oligonucleotides. The chain is Exodeoxyribonuclease 7 large subunit from Streptococcus pneumoniae (strain ATCC BAA-255 / R6).